The sequence spans 128 residues: Putative histidinol dehydrogenase (128 aa).

The segment at 21-84 is disordered; that stretch reads QRPDIAPRHH…EGQEKASGRR (64 aa). Composition is skewed to basic and acidic residues over residues 34–50 and 72–81; these read HRAEREAVEADRSRRTA and QGREGQEKAS.

The protein belongs to the histidinol dehydrogenase family.

The catalysed reaction is L-histidinol + 2 NAD(+) + H2O = L-histidine + 2 NADH + 3 H(+). It participates in amino-acid biosynthesis; L-histidine biosynthesis; L-histidine from 5-phospho-alpha-D-ribose 1-diphosphate: step 9/9. In terms of biological role, catalyzes the sequential NAD-dependent oxidations of L-histidinol to L-histidinaldehyde and then to L-histidine. The chain is Putative histidinol dehydrogenase (hisD) from Azospirillum brasilense.